A 437-amino-acid chain; its full sequence is Aminopeptidase W (437 aa).

Active-site residues include Cys70, His361, and Asn382.

It belongs to the peptidase C1 family.

The protein resides in the cytoplasm. This is Aminopeptidase W (pepW) from Lactobacillus delbrueckii subsp. lactis.